Consider the following 801-residue polypeptide: Na(+)/H(+) antiporter subunit A1 (801 aa).

Transmembrane regions (helical) follow at residues 4 to 25 (LHIAVILPLIFALIIPILYRFF), 30 to 49 (LGWFVLPVPIVIFIYMLTLI), 79 to 101 (LGLLFSLLISGIGSLVVLYSIGY), 108 to 127 (LGNFYCYLLLFMGAMLGVVL), 131 to 153 (VIILYLFWELTSFSSFLLISFWR), 166 to 188 (LIITVFGGLSLLGGIILLAIPTQ), 208 to 230 (FIFAMILIMIGAFTKSAQFPFYI), 243 to 265 (SAYLHSATMVKAGLYLIARMTPI), 270 to 289 (QGWIWTVTLVGLITLFWASL), 302 to 324 (AFSTVSQLGMIMAMLGIGAISYH), 339 to 361 (AAIFHLINHATFKGALFMITGAV), 373 to 395 (LGGLLTIMPISFTITVITALSMA), 429 to 451 (YLFPIIGIVGSVFTFVYSIKFIM), 472 to 494 (ILMLLSPAILATLVIVFGLFPGI), 526 to 548 (AFLSTLVIYILGILLIVTFSYWV), 589 to 611 (NNLVIIFGALILLTFVTVFSVPF), 621 to 641 (IRIFEVCIVILLLSAAFLILF), 646 to 668 (LFSIIMLSAVGYAVSVLFIFFKA), 672 to 694 (ALTQFVVESISTALFLLCFYHLP), 707 to 729 (LTNALIAGGVGLSVIIIGLIAYG), and 767 to 784 (LFESSVLGIAGLAVYTMI).

This sequence belongs to the CPA3 antiporters (TC 2.A.63) subunit A family. May form a heterooligomeric complex that consists of seven subunits: mnhA1, mnhB1, mnhC1, mnhD1, mnhE1, mnhF1 and mnhG1.

The protein localises to the cell membrane. Its activity is regulated as follows. Na(+) extrusion is completely inhibited by the H(+) conductor carbonyl cyanide m-chlorophenylhydrazone (CCCP). Mnh complex is a Na(+)/H(+) antiporter involved in Na(+) excretion. This chain is Na(+)/H(+) antiporter subunit A1 (mnhA1), found in Staphylococcus aureus (strain MRSA252).